Consider the following 256-residue polypeptide: Chloroplastic group IIB intron splicing facilitator CRS2, chloroplastic (256 aa).

Residues 1–45 (MSLLAAAIPSTSSHFSAPFLPSFRMPRKSLTAPLHRIRRPRPFTV) constitute a chloroplast transit peptide. Y74 contributes to the tRNA binding site. The active-site Proton acceptor is H79. The tRNA site is built by Y124, N126, and N172.

This sequence belongs to the PTH family. CRS2 subfamily. As to quaternary structure, interacts with CAF1 and CAF2. Part of large ribonucleo-protein complexes that include group IIB introns and either CAF1 or CAF2.

It is found in the plastid. It localises to the chloroplast stroma. Functionally, required for the splicing of group IIB introns in chloroplasts. Forms complexes with either CAF1 or CAF2 which, in turn, interact with RNA and confer intron specificity of the splicing particles. Has no peptidyl-tRNA hydrolase activity. This Zea mays (Maize) protein is Chloroplastic group IIB intron splicing facilitator CRS2, chloroplastic (CRS2).